The following is a 363-amino-acid chain: MARSLTILAIVFAVATARVTKSESPKEILAQVNKDSFGNSILSVLQLQLATGGPVGEIQILLNNIASQLNGDQKKADKVHESDTVAFEKIIADLEQEIAYHQTQIVALSNLRDSTTEALGEAEVEVRVVTSDIANNEKSFADESATRQSQHDTWVRKDAEHVDQMEAIDEASKIVQHLQAGVAFAQLKSRFEKVQAKLMESKHALFKPLINALTQLASKVDNKSIIKILELLAQIRQQLVASRASLLATEERQAANWEVQSSHLQEEHKRLVERKAFLENSIVQFKVTIQEAVEDLEDQTLFLEDAEDSLAIQERWAAEQESQYEAQTFEREQQLEVVERLQEVLTQKLSAASEFLQVREEVF.

Residues 1-17 (MARSLTILAIVFAVATA) form the signal peptide. The propeptide occupies 18-52 (RVTKSESPKEILAQVNKDSFGNSILSVLQLQLATG). The stretch at 85–119 (VAFEKIIADLEQEIAYHQTQIVALSNLRDSTTEAL) forms a coiled coil. Positions 190–221 (RFEKVQAKLMESKHALFKPLINALTQLASKVD) are excised as a propeptide. The stretch at 244–352 (ASLLATEERQ…EVLTQKLSAA (109 aa)) forms a coiled coil.

This sequence belongs to the TMP family. Post-translationally, two components are produced by post-translational processing from the precursor peptide.

It is found in the trichocyst. In terms of biological role, structural protein that crystallize inside the trichocyst matrix. This Paramecium tetraurelia protein is Trichocyst matrix protein T4-A (T4A).